The primary structure comprises 99 residues: MMDVDRSIRVAVDTGDVTLGSEKSIQSLKLGKGQLVIVAANTPKDIVEDVEYYTNLSDIPSYTYEGSSVELGSVCGKPFTVATLIVNDPGDSTILDDLR.

Belongs to the eukaryotic ribosomal protein eL30 family.

This Methanobrevibacter smithii (strain ATCC 35061 / DSM 861 / OCM 144 / PS) protein is Large ribosomal subunit protein eL30.